Here is a 192-residue protein sequence, read N- to C-terminus: dTTP/UTP pyrophosphatase (192 aa).

The active-site Proton acceptor is Asp70.

This sequence belongs to the Maf family. YhdE subfamily. A divalent metal cation is required as a cofactor.

It is found in the cytoplasm. The enzyme catalyses dTTP + H2O = dTMP + diphosphate + H(+). It carries out the reaction UTP + H2O = UMP + diphosphate + H(+). Nucleoside triphosphate pyrophosphatase that hydrolyzes dTTP and UTP. May have a dual role in cell division arrest and in preventing the incorporation of modified nucleotides into cellular nucleic acids. The protein is dTTP/UTP pyrophosphatase of Clostridium perfringens (strain ATCC 13124 / DSM 756 / JCM 1290 / NCIMB 6125 / NCTC 8237 / Type A).